The primary structure comprises 356 residues: S-adenosylmethionine:tRNA ribosyltransferase-isomerase (356 aa).

This sequence belongs to the QueA family. In terms of assembly, monomer.

It localises to the cytoplasm. It catalyses the reaction 7-aminomethyl-7-carbaguanosine(34) in tRNA + S-adenosyl-L-methionine = epoxyqueuosine(34) in tRNA + adenine + L-methionine + 2 H(+). It functions in the pathway tRNA modification; tRNA-queuosine biosynthesis. Functionally, transfers and isomerizes the ribose moiety from AdoMet to the 7-aminomethyl group of 7-deazaguanine (preQ1-tRNA) to give epoxyqueuosine (oQ-tRNA). This Xanthomonas campestris pv. campestris (strain 8004) protein is S-adenosylmethionine:tRNA ribosyltransferase-isomerase.